Here is a 195-residue protein sequence, read N- to C-terminus: Dephospho-CoA kinase (195 aa).

The DPCK domain occupies 3-195 (IIGLTGSIAM…FSIIENLLKN (193 aa)). 11–16 (AMGKST) provides a ligand contact to ATP.

It belongs to the CoaE family.

The protein localises to the cytoplasm. The catalysed reaction is 3'-dephospho-CoA + ATP = ADP + CoA + H(+). The protein operates within cofactor biosynthesis; coenzyme A biosynthesis; CoA from (R)-pantothenate: step 5/5. Catalyzes the phosphorylation of the 3'-hydroxyl group of dephosphocoenzyme A to form coenzyme A. This Bartonella quintana (strain Toulouse) (Rochalimaea quintana) protein is Dephospho-CoA kinase.